A 463-amino-acid polypeptide reads, in one-letter code: RuvB-like 2 (463 aa).

Ala-2 carries the post-translational modification N-acetylalanine. Residue Lys-9 forms a Glycyl lysine isopeptide (Lys-Gly) (interchain with G-Cter in SUMO2) linkage. 77-84 (GQPGTGKT) contributes to the ATP binding site. At Ser-437 the chain carries Phosphoserine. Residues Lys-444 and Lys-456 each participate in a glycyl lysine isopeptide (Lys-Gly) (interchain with G-Cter in SUMO2) cross-link.

This sequence belongs to the RuvB family. As to quaternary structure, forms homohexameric rings. Can form a dodecamer with RUVBL1 made of two stacked hexameric rings; however, even though RUVBL1 and RUVBL2 are present in equimolar ratio, the oligomeric status of each hexamer is not known. Oligomerization may regulate binding to nucleic acids and conversely, binding to nucleic acids may affect the dodecameric assembly. Interaction of the complex with DHX34 results in conformational changes of the N-terminus of the RUVBL2 subunits, resulting in loss of nucleotide binding ability and ATP hydrolysis of the complex. Interacts with the transcriptional activation domain of MYC. Interacts with ATF2. Component of the RNA polymerase II holoenzyme complex. May also act to bridge the LEF1/TCF1-CTNNB1 complex and TBP. Component of the NuA4 histone acetyltransferase complex which contains the catalytic subunit KAT5/TIP60 and the subunits EP400, TRRAP/PAF400, BRD8/SMAP, EPC1, DMAP1/DNMAP1, RUVBL1/TIP49, RUVBL2, ING3, actin, ACTL6A/BAF53A, MORF4L1/MRG15, MORF4L2/MRGX, MRGBP, YEATS4/GAS41, VPS72/YL1 and MEAF6. The NuA4 complex interacts with MYC and the adenovirus E1A protein. RUVBL2 interacts with EP400. Component of a NuA4-related complex which contains EP400, TRRAP/PAF400, SRCAP, BRD8/SMAP, EPC1, DMAP1/DNMAP1, RUVBL1/TIP49, RUVBL2, actin, ACTL6A/BAF53A, VPS72 and YEATS4/GAS41. Interacts with NPAT. Component of the chromatin-remodeling INO80 complex; specifically part of a complex module associated with the helicase ATP-binding and the helicase C-terminal domain of INO80. Component of some MLL1/MLL complex, at least composed of the core components KMT2A/MLL1, ASH2L, HCFC1/HCF1, WDR5 and RBBP5, as well as the facultative components BACC1, CHD8, E2F6, HSP70, INO80C, KANSL1, LAS1L, MAX, MCRS1, MGA, MYST1/MOF, PELP1, PHF20, PRP31, RING2, RUVB1/TIP49A, RUVB2/TIP49B, SENP3, TAF1, TAF4, TAF6, TAF7, TAF9 and TEX10. Interacts with IGHMBP2. Interacts with TELO2. Interacts with HINT1. Component of a SWR1-like complex. Component of the R2TP complex composed at least of RUVBL1, RUVBL2, RPAP3 and PIHD1. Component of the PAQosome complex which is responsible for the biogenesis of several protein complexes and which consists of R2TP complex members RUVBL1, RUVBL2, RPAP3 and PIH1D1, URI complex members PFDN2, PFDN6, PDRG1, UXT and URI1 as well as ASDURF, POLR2E and DNAAF10/WDR92. Interacts with ITFG1. Interacts with ZMYND10. Interacts with WAC; WAC positively regulates MTOR activity by promoting the assembly of the TTT complex composed of TELO2, TTI1 and TTI2 and the RUVBL complex composed of RUVBL1 and RUVBL2 into the TTT-RUVBL complex which leads to the dimerization of the mTORC1 complex and its subsequent activation. Forms a complex with APPL1 and APPL2. Interacts with ZNHIT2 (via HIT-type zinc finger) in the presence of ATP or ADP; shows a stronger interaction in the presence of ADP. The RUVBL1/RUVBL2 complex interacts with ZNHIT1 (via HIT-type zinc finger), ZNHIT3 (via HIT-type zinc finger), ZNHIT6 (via HIT-type zinc finger) and DDX59/ZNHIT5 (via HIT-type zinc finger) in the presence of ADP. Interacts with NOPCHAP1; the interaction is direct and disrupted upon ATP binding. Interacts with SMG1. (Microbial infection) Interacts with Mumps L polymerase; this interaction regulates the viral transcription. In terms of tissue distribution, ubiquitously expressed. Highly expressed in testis and thymus.

It localises to the nucleus matrix. Its subcellular location is the nucleus. It is found in the nucleoplasm. The protein localises to the cytoplasm. The protein resides in the membrane. It localises to the dynein axonemal particle. It carries out the reaction ATP + H2O = ADP + phosphate + H(+). Functionally, possesses single-stranded DNA-stimulated ATPase and ATP-dependent DNA helicase (5' to 3') activity; hexamerization is thought to be critical for ATP hydrolysis and adjacent subunits in the ring-like structure contribute to the ATPase activity. Component of the NuA4 histone acetyltransferase complex which is involved in transcriptional activation of select genes principally by acetylation of nucleosomal histones H4 and H2A. This modification may both alter nucleosome -DNA interactions and promote interaction of the modified histones with other proteins which positively regulate transcription. This complex may be required for the activation of transcriptional programs associated with oncogene and proto-oncogene mediated growth induction, tumor suppressor mediated growth arrest and replicative senescence, apoptosis, and DNA repair. The NuA4 complex ATPase and helicase activities seem to be, at least in part, contributed by the association of RUVBL1 and RUVBL2 with EP400. NuA4 may also play a direct role in DNA repair when recruited to sites of DNA damage. Component of a SWR1-like complex that specifically mediates the removal of histone H2A.Z/H2AZ1 from the nucleosome. Proposed core component of the chromatin remodeling INO80 complex which exhibits DNA- and nucleosome-activated ATPase activity and catalyzes ATP-dependent nucleosome sliding. Plays an essential role in oncogenic transformation by MYC and also modulates transcriptional activation by the LEF1/TCF1-CTNNB1 complex. May also inhibit the transcriptional activity of ATF2. Involved in the endoplasmic reticulum (ER)-associated degradation (ERAD) pathway where it negatively regulates expression of ER stress response genes. May play a role in regulating the composition of the U5 snRNP complex. This Homo sapiens (Human) protein is RuvB-like 2 (RUVBL2).